The sequence spans 418 residues: Sprouty-related, EVH1 domain-containing protein 2 (418 aa).

The 118-residue stretch at 5 to 122 (THPDDDSYIV…RGVRKAIEDL (118 aa)) folds into the WH1 domain. Residues 127–171 (TTSSSTIHNEAELGDDDVFTTATDSSSNSSQKREQPTRTISSPTS) are disordered. A compositionally biased stretch (polar residues) spans 146 to 156 (TTATDSSSNSS). The 57-residue stretch at 201–257 (PYRQVSFPDDDEEIVRINPREKIWMTGYEDYRHAPVRGKYPDPSEDADSSYVRFAKG) folds into the KBD domain. Phosphoserine is present on S206. Phosphotyrosine is present on residues Y228 and Y231. Residues 275-302 (GLGEDPKGRGGSVIKTQPSRGKSRRRKE) are disordered. Residues 308 to 416 (RCVYCRDMFN…CRCCGGKHKA (109 aa)) enclose the SPR domain.

In terms of assembly, homodimer and heterodimer. Able to interact with SPRED1 to form heterodimers. Interacts with RAS. May interact with ZDHHC13 (via ANK repeats) and ZDHHC17 (via ANK repeats). Interacts with TESK1. Interacts with NF1. In terms of processing, phosphorylated on serine and threonine residues. Phosphorylated on tyrosine. Phosphorylation of Tyr-228 and Tyr-231 are required for ubiquitination. Post-translationally, ubiquitinated; leading to degradation by the proteasome. As to expression, expressed in liver, skin, small intestine, salivary gland and prostate.

The protein localises to the cell membrane. It is found in the cytoplasmic vesicle. It localises to the secretory vesicle membrane. The protein resides in the cytoplasm. In terms of biological role, negatively regulates Ras signaling pathways and downstream activation of MAP kinases. Recruits and translocates NF1 to the cell membrane, thereby enabling NF1-dependent hydrolysis of active GTP-bound Ras to inactive GDP-bound Ras. Inhibits fibroblast growth factor (FGF)-induced retinal lens fiber differentiation, probably by inhibiting FGF-mediated phosphorylation of ERK1/2. Inhibits TGFB-induced epithelial-to-mesenchymal transition in lens epithelial cells. This chain is Sprouty-related, EVH1 domain-containing protein 2 (SPRED2), found in Homo sapiens (Human).